Consider the following 1043-residue polypeptide: P3N-PIPO polyprotein (1043 aa).

One can recognise a Peptidase S30 domain in the interval 219–362; that stretch reads KMNDQGVDML…RTMSHKIVHF (144 aa). Residues His-270, Asp-279, and Ser-313 each act as for P1 proteinase activity in the active site. The Involved in interaction with stylet and aphid transmission motif lies at 414–417; that stretch reads KITC. The Involved in virions binding and aphid transmission motif lies at 672–674; it reads PTK. One can recognise a Peptidase C6 domain in the interval 698 to 820; that stretch reads MYIAKEGYCY…ESSLKHYRVG (123 aa). Catalysis depends on for helper component proteinase activity residues Cys-706 and His-779.

It belongs to the potyviridae P3N-PIPO polyprotein family. In terms of assembly, interacts (via PIPO domain) with host PCaP1 protein; this interaction may help to anchor the movement complex to the plasma membrane from which the complex could move to the plasmodesmata. In terms of processing, potyviral RNA is expressed as two polyproteins which undergo post-translational proteolytic processing. Genome polyprotein is processed by NIa-pro, P1 and HC-pro proteinases resulting in the production of at least ten individual proteins. P3N-PIPO is cleaved by P1 and HC-pro proteinases resulting in the production of three individual proteins. The P1 proteinase and the HC-pro cleave only their respective C-termini autocatalytically.

The protein localises to the host cell junction. It is found in the host plasmodesma. The catalysed reaction is Hydrolyzes a Gly-|-Gly bond at its own C-terminus, commonly in the sequence -Tyr-Xaa-Val-Gly-|-Gly, in the processing of the potyviral polyprotein.. In terms of biological role, cysteine protease that cleaves a Gly-Gly dipeptide at its own C-terminus. Required for aphid transmission and also has proteolytic activity. Interacts with virions and aphid stylets. Acts as a suppressor of RNA-mediated gene silencing, also known as post-transcriptional gene silencing (PTGS), a mechanism of plant viral defense that limits the accumulation of viral RNAs. May have RNA-binding activity. Allows efficient cell to cell propagation, by bypassing the host cell wall barrier. Transports viral genome to neighboring plant cells directly through plasmosdesmata, without any budding. The chain is P3N-PIPO polyprotein from Alliaria petiolata (Garlic mustard).